A 104-amino-acid chain; its full sequence is NADH-quinone oxidoreductase subunit K (104 aa).

3 helical membrane passes run 4 to 24 (VPAS…LFGA), 31 to 51 (VIVL…LVAF), and 67 to 87 (LFTM…LIAL).

This sequence belongs to the complex I subunit 4L family. In terms of assembly, NDH-1 is composed of 14 different subunits. Subunits NuoA, H, J, K, L, M, N constitute the membrane sector of the complex.

It localises to the cell membrane. It catalyses the reaction a quinone + NADH + 5 H(+)(in) = a quinol + NAD(+) + 4 H(+)(out). Functionally, NDH-1 shuttles electrons from NADH, via FMN and iron-sulfur (Fe-S) centers, to quinones in the respiratory chain. The immediate electron acceptor for the enzyme in this species is believed to be a menaquinone. Couples the redox reaction to proton translocation (for every two electrons transferred, four hydrogen ions are translocated across the cytoplasmic membrane), and thus conserves the redox energy in a proton gradient. This is NADH-quinone oxidoreductase subunit K from Bacillus cytotoxicus (strain DSM 22905 / CIP 110041 / 391-98 / NVH 391-98).